We begin with the raw amino-acid sequence, 87 residues long: Toxin RelG (87 aa).

The protein belongs to the RelE toxin family. Interacts with cognate antitoxin RelF, which neutralizes the toxin. Also interacts with non-cognate antitoxin RelB in vitro, in M.smegmatis this neutralizes the toxicity of this toxin.

Functionally, toxic component of a type II toxin-antitoxin (TA) system. Has RNase activity and preferentially cleaves at the 3'-end of purine ribonucleotides. Overexpression in M.tuberculosis or M.smegmatis inhibits colony formation in a bacteriostatic rather than bacteriocidal fashion. Its toxic effect is neutralized by coexpression with cognate antitoxin RelB2 (shown only for M.smegmatis). Overexpression also increases the number of gentamicin-tolerant and levofloxacin-tolerant persister cells. In combination with cognate antitoxin RelF represses its own promoter. Has been seen to bind DNA in complex with antitoxin RelF but not alone. The chain is Toxin RelG (relG) from Mycobacterium tuberculosis (strain ATCC 25618 / H37Rv).